The primary structure comprises 842 residues: Protein translocase subunit SecA (842 aa).

ATP-binding positions include Gln85, 103–107 (GEGKT), and Asp493. Zn(2+) is bound by residues Cys825, Cys827, Cys836, and His837.

Belongs to the SecA family. Monomer and homodimer. Part of the essential Sec protein translocation apparatus which comprises SecA, SecYEG and auxiliary proteins SecDF. Other proteins may also be involved. Zn(2+) is required as a cofactor.

Its subcellular location is the cell membrane. It is found in the cytoplasm. It carries out the reaction ATP + H2O + cellular proteinSide 1 = ADP + phosphate + cellular proteinSide 2.. Its function is as follows. Part of the Sec protein translocase complex. Interacts with the SecYEG preprotein conducting channel. Has a central role in coupling the hydrolysis of ATP to the transfer of proteins into and across the cell membrane, serving as an ATP-driven molecular motor driving the stepwise translocation of polypeptide chains across the membrane. The protein is Protein translocase subunit SecA of Streptococcus uberis (strain ATCC BAA-854 / 0140J).